We begin with the raw amino-acid sequence, 404 residues long: Cysteine desulfurase IscS (404 aa).

Residues 75–76 (AT), Asn155, Gln183, and 203–205 (SGH) each bind pyridoxal 5'-phosphate. Position 206 is an N6-(pyridoxal phosphate)lysine (Lys206). Position 243 (Thr243) interacts with pyridoxal 5'-phosphate. Catalysis depends on Cys328, which acts as the Cysteine persulfide intermediate. Cys328 contacts [2Fe-2S] cluster.

Belongs to the class-V pyridoxal-phosphate-dependent aminotransferase family. NifS/IscS subfamily. As to quaternary structure, homodimer. Forms a heterotetramer with IscU, interacts with other sulfur acceptors. The cofactor is pyridoxal 5'-phosphate.

The protein localises to the cytoplasm. It carries out the reaction (sulfur carrier)-H + L-cysteine = (sulfur carrier)-SH + L-alanine. The protein operates within cofactor biosynthesis; iron-sulfur cluster biosynthesis. In terms of biological role, master enzyme that delivers sulfur to a number of partners involved in Fe-S cluster assembly, tRNA modification or cofactor biosynthesis. Catalyzes the removal of elemental sulfur atoms from cysteine to produce alanine. Functions as a sulfur delivery protein for Fe-S cluster synthesis onto IscU, an Fe-S scaffold assembly protein, as well as other S acceptor proteins. The protein is Cysteine desulfurase IscS of Pectobacterium carotovorum subsp. carotovorum (strain PC1).